Reading from the N-terminus, the 576-residue chain is Proline--tRNA ligase (576 aa).

It belongs to the class-II aminoacyl-tRNA synthetase family. ProS type 1 subfamily. Homodimer.

It localises to the cytoplasm. The enzyme catalyses tRNA(Pro) + L-proline + ATP = L-prolyl-tRNA(Pro) + AMP + diphosphate. Functionally, catalyzes the attachment of proline to tRNA(Pro) in a two-step reaction: proline is first activated by ATP to form Pro-AMP and then transferred to the acceptor end of tRNA(Pro). As ProRS can inadvertently accommodate and process non-cognate amino acids such as alanine and cysteine, to avoid such errors it has two additional distinct editing activities against alanine. One activity is designated as 'pretransfer' editing and involves the tRNA(Pro)-independent hydrolysis of activated Ala-AMP. The other activity is designated 'posttransfer' editing and involves deacylation of mischarged Ala-tRNA(Pro). The misacylated Cys-tRNA(Pro) is not edited by ProRS. The sequence is that of Proline--tRNA ligase from Dechloromonas aromatica (strain RCB).